The primary structure comprises 90 residues: Small ribosomal subunit protein uS15 (90 aa).

This sequence belongs to the universal ribosomal protein uS15 family. Part of the 30S ribosomal subunit. Forms a bridge to the 50S subunit in the 70S ribosome, contacting the 23S rRNA.

One of the primary rRNA binding proteins, it binds directly to 16S rRNA where it helps nucleate assembly of the platform of the 30S subunit by binding and bridging several RNA helices of the 16S rRNA. Functionally, forms an intersubunit bridge (bridge B4) with the 23S rRNA of the 50S subunit in the ribosome. The protein is Small ribosomal subunit protein uS15 of Helicobacter pylori (strain HPAG1).